We begin with the raw amino-acid sequence, 83 residues long: Putative defensin-like protein 257 (83 aa).

Residues 1–25 (MMNVSLKLSFLVFILVIMSNLGSEA) form the signal peptide. 3 disulfide bridges follow: Cys-57-Cys-73, Cys-63-Cys-80, and Cys-67-Cys-82.

The protein belongs to the DEFL family.

The protein localises to the secreted. This Arabidopsis thaliana (Mouse-ear cress) protein is Putative defensin-like protein 257.